Consider the following 306-residue polypeptide: Ribosomal protein L11 methyltransferase (306 aa).

S-adenosyl-L-methionine-binding residues include threonine 154, glycine 179, aspartate 201, and asparagine 242.

Belongs to the methyltransferase superfamily. PrmA family.

The protein resides in the cytoplasm. The catalysed reaction is L-lysyl-[protein] + 3 S-adenosyl-L-methionine = N(6),N(6),N(6)-trimethyl-L-lysyl-[protein] + 3 S-adenosyl-L-homocysteine + 3 H(+). In terms of biological role, methylates ribosomal protein L11. The chain is Ribosomal protein L11 methyltransferase from Xanthomonas euvesicatoria pv. vesicatoria (strain 85-10) (Xanthomonas campestris pv. vesicatoria).